The chain runs to 120 residues: Large ribosomal subunit protein uL18 (120 aa).

This sequence belongs to the universal ribosomal protein uL18 family. As to quaternary structure, part of the 50S ribosomal subunit; part of the 5S rRNA/L5/L18/L25 subcomplex. Contacts the 5S and 23S rRNAs.

Its function is as follows. This is one of the proteins that bind and probably mediate the attachment of the 5S RNA into the large ribosomal subunit, where it forms part of the central protuberance. This is Large ribosomal subunit protein uL18 from Clostridium botulinum (strain Eklund 17B / Type B).